Reading from the N-terminus, the 570-residue chain is Polypeptide N-acetylgalactosaminyltransferase 2 (570 aa).

The Cytoplasmic segment spans residues 1 to 6 (MRRRSR). A helical; Signal-anchor for type II membrane protein membrane pass occupies residues 7-24 (MLLCFALLWVLGIAYYMY). At 25–570 (SGGGSALAAG…QWKFSLNLQQ (546 aa)) the chain is on the lumenal side. Ser-29 carries an O-linked (Xyl...) (chondroitin sulfate) serine glycan. Disulfide bonds link Cys-125/Cys-353, Cys-344/Cys-422, Cys-455/Cys-472, and Cys-495/Cys-512. The segment at 134–239 (LPATSVVITF…ERWLEPLLER (106 aa)) is catalytic subdomain A. Residues Thr-142, Asp-175, and Arg-200 each coordinate substrate. Asp-223 lines the Mn(2+) pocket. Residue Ser-224 participates in substrate binding. His-225 lines the Mn(2+) pocket. The segment at 299–361 (PIKTPMIAGG…PCSRVGHVFR (63 aa)) is catalytic subdomain B. A substrate-binding site is contributed by Trp-330. His-358 is a Mn(2+) binding site. Substrate-binding residues include Arg-361, His-364, and Tyr-366. Residues 442–565 (QDIAFGALQQ…PALSQQWKFS (124 aa)) enclose the Ricin B-type lectin domain. Residue Asn-515 is glycosylated (N-linked (GlcNAc...) asparagine). Position 535 is a phosphoserine (Ser-535). Residues Cys-538 and Cys-554 are joined by a disulfide bond.

The protein belongs to the glycosyltransferase 2 family. GalNAc-T subfamily. Mn(2+) serves as cofactor. Widely expressed at high level.

The protein resides in the golgi apparatus. It localises to the golgi stack membrane. Its subcellular location is the secreted. It catalyses the reaction L-seryl-[protein] + UDP-N-acetyl-alpha-D-galactosamine = a 3-O-[N-acetyl-alpha-D-galactosaminyl]-L-seryl-[protein] + UDP + H(+). The enzyme catalyses L-threonyl-[protein] + UDP-N-acetyl-alpha-D-galactosamine = a 3-O-[N-acetyl-alpha-D-galactosaminyl]-L-threonyl-[protein] + UDP + H(+). It functions in the pathway protein modification; protein glycosylation. In terms of biological role, catalyzes the initial reaction in O-linked oligosaccharide biosynthesis, the transfer of an N-acetyl-D-galactosamine residue to a serine or threonine residue on the protein receptor. Has a broad spectrum of substrates for peptides such as EA2, Muc5AC, Muc1a, Muc1b. Probably involved in O-linked glycosylation of the immunoglobulin A1 (IgA1) hinge region. Involved in O-linked glycosylation of APOC-III, ANGPTL3 and PLTP. It participates in the regulation of HDL-C metabolism. The polypeptide is Polypeptide N-acetylgalactosaminyltransferase 2 (Galnt2) (Mus musculus (Mouse)).